The sequence spans 238 residues: End-binding protein 1 (238 aa).

The 103-residue stretch at 15-117 (FVGRVSLLKW…FFQWFKWFFD (103 aa)) folds into the Calponin-homology (CH) domain. An interaction with aurora kinase region spans residues 101-238 (KYMDNFEFFQ…EDILYAEYHQ (138 aa)). The span at 124–165 (KSGATESGSANAVTKTSKPGNRSGSTAASMQNPKASSTSGPS) shows a compositional bias: polar residues. The tract at residues 124 to 169 (KSGATESGSANAVTKTSKPGNRSGSTAASMQNPKASSTSGPSIDSK) is disordered. Ser-148 carries the post-translational modification Phosphoserine. The 83-residue stretch at 156-238 (PKASSTSGPS…EDILYAEYHQ (83 aa)) folds into the EB1 C-terminal domain.

The protein belongs to the MAPRE family. As to quaternary structure, homodimer; disulfide-linked and via interaction of the C-terminal EB1-specific domains. Interacts with BOP1 (via C-terminal WD repeats). Interacts with giardin subunit gamma, neurogenic locus notch homolog protein, GL50803_8358 and GL50803_11327. Interacts (via C-terminal residues 101-238) with aurora kinase. Interacts with tubulin gamma chain. Phosphorylated in vitro by aurora kinase. Phosphorylation is important for cell division.

The protein resides in the nucleus membrane. It localises to the cytoplasm. It is found in the cytoskeleton. Its subcellular location is the spindle. The protein localises to the nucleus envelope. The protein resides in the flagellum axoneme. It localises to the cell projection. It is found in the cilium. Its subcellular location is the flagellum. Functionally, involved in cell division. Involved in mitosis. Regulates dynamics of microtubules (MTs) during mitosis. Required for cytokinesis. Binds polymerized MTs in vitro. Is able to rescue a mitotic division defect, the proper positioning of the nucleus, of the S.cerevisiae BIM1 knockout mutant in a complementation assay. May play a role in spindle positioning and MT distribution. May be involved in MT nucleation for the formation of median bodies and in the biogenesis of flagella. Based on its localization to both the flagellar exit point and the distal flagellar tips, it may mediate the transition from anterograde to retrograde intraflagellar transport (IFT). This Giardia intestinalis (strain ATCC 50803 / WB clone C6) (Giardia lamblia) protein is End-binding protein 1.